The sequence spans 196 residues: Large ribosomal subunit protein bL9 (196 aa).

The segment at 172-196 is disordered; that stretch reads NESARPEAFFDPEAEIEQEEGEENA. Over residues 181-196 the composition is skewed to acidic residues; the sequence is FDPEAEIEQEEGEENA.

The protein belongs to the bacterial ribosomal protein bL9 family.

Binds to the 23S rRNA. This chain is Large ribosomal subunit protein bL9, found in Chelativorans sp. (strain BNC1).